We begin with the raw amino-acid sequence, 237 residues long: Apoptosis regulator OPG045 (237 aa).

Belongs to the orthopoxvirus OPG045 family. In terms of assembly, interacts with host BAK1, BAX and BID.

It is found in the host mitochondrion outer membrane. The protein localises to the host cytoplasm. Plays a role in the inhibition of host apoptosis. Interacts with host BAX and thereby inhibits its activity. The protein is Apoptosis regulator OPG045 (OPG045) of Homo sapiens (Human).